The sequence spans 518 residues: ATP synthase subunit alpha (518 aa).

169–176 is an ATP binding site; the sequence is GDRKTGKT.

This sequence belongs to the ATPase alpha/beta chains family. F-type ATPases have 2 components, CF(1) - the catalytic core - and CF(0) - the membrane proton channel. CF(1) has five subunits: alpha(3), beta(3), gamma(1), delta(1), epsilon(1). CF(0) has three main subunits: a(1), b(2) and c(9-12). The alpha and beta chains form an alternating ring which encloses part of the gamma chain. CF(1) is attached to CF(0) by a central stalk formed by the gamma and epsilon chains, while a peripheral stalk is formed by the delta and b chains.

The protein resides in the cell membrane. It carries out the reaction ATP + H2O + 4 H(+)(in) = ADP + phosphate + 5 H(+)(out). In terms of biological role, produces ATP from ADP in the presence of a proton gradient across the membrane. The alpha chain is a regulatory subunit. The protein is ATP synthase subunit alpha of Enterococcus faecalis (strain ATCC 700802 / V583).